We begin with the raw amino-acid sequence, 364 residues long: MQERHTEQDYRALLIADTPIIDVRAPIEFEHGAMPAAINLPLMNNDERAAVGTCYKQQGSDAALALGHKLVAGEIRQQRMDAWRAACLQNPQGILCCARGGQRSHIVQSWLHAAGIDYPLVEGGYKALRQTAIQATIELAQKPIVLIGGCTGSGKTLLVQQQPNGVDLEGLARHRGSAFGRTLQPQLSQASFENLLAAEMLKTDARQNLRLWVLEDESRMIGSNHLPECLRERMTQAAIAVVEDPFEIRLERLNEEYFLRMHHDFTHAYGDEQGWQEYCEYLHHGLSAIKRRLGLQRYNELAARLDAALTTQLTTGSTDGHLAWLVPLLEEYYDPMYRYQLEKKAEKVVFRGEWAEVAEWVKAR.

Positions 14 to 137 (LIADTPIIDV…LRQTAIQATI (124 aa)) constitute a Rhodanese domain. Cys-97 serves as the catalytic S-selanylcysteine intermediate.

It belongs to the SelU family. In terms of assembly, monomer.

The enzyme catalyses 5-methylaminomethyl-2-thiouridine(34) in tRNA + selenophosphate + (2E)-geranyl diphosphate + H2O + H(+) = 5-methylaminomethyl-2-selenouridine(34) in tRNA + (2E)-thiogeraniol + phosphate + diphosphate. It catalyses the reaction 5-methylaminomethyl-2-thiouridine(34) in tRNA + (2E)-geranyl diphosphate = 5-methylaminomethyl-S-(2E)-geranyl-thiouridine(34) in tRNA + diphosphate. The catalysed reaction is 5-methylaminomethyl-S-(2E)-geranyl-thiouridine(34) in tRNA + selenophosphate + H(+) = 5-methylaminomethyl-2-(Se-phospho)selenouridine(34) in tRNA + (2E)-thiogeraniol. It carries out the reaction 5-methylaminomethyl-2-(Se-phospho)selenouridine(34) in tRNA + H2O = 5-methylaminomethyl-2-selenouridine(34) in tRNA + phosphate. Functionally, involved in the post-transcriptional modification of the uridine at the wobble position (U34) of tRNA(Lys), tRNA(Glu) and tRNA(Gln). Catalyzes the conversion of 2-thiouridine (S2U-RNA) to 2-selenouridine (Se2U-RNA). Acts in a two-step process involving geranylation of 2-thiouridine (S2U) to S-geranyl-2-thiouridine (geS2U) and subsequent selenation of the latter derivative to 2-selenouridine (Se2U) in the tRNA chain. The protein is tRNA 2-selenouridine synthase of Escherichia coli (strain K12 / MC4100 / BW2952).